A 105-amino-acid chain; its full sequence is Large ribosomal subunit protein uL24 (105 aa).

The interval 67–105 is disordered; the sequence is HISNLNPVDPKTGKATRIGRRKSSEGTLVRYSKKSGEEI.

The protein belongs to the universal ribosomal protein uL24 family. In terms of assembly, part of the 50S ribosomal subunit.

One of two assembly initiator proteins, it binds directly to the 5'-end of the 23S rRNA, where it nucleates assembly of the 50S subunit. In terms of biological role, one of the proteins that surrounds the polypeptide exit tunnel on the outside of the subunit. In Bacteroides thetaiotaomicron (strain ATCC 29148 / DSM 2079 / JCM 5827 / CCUG 10774 / NCTC 10582 / VPI-5482 / E50), this protein is Large ribosomal subunit protein uL24.